The following is a 517-amino-acid chain: Apolipoprotein N-acyltransferase (517 aa).

7 consecutive transmembrane segments (helical) span residues 5 to 25 (SFFS…ATLT), 26 to 46 (FAPY…LWLL), 55 to 75 (GLIG…WVHV), 90 to 110 (FLMS…GALF), 128 to 148 (VIWL…PWLW), 162 to 182 (APIL…GALV), and 193 to 213 (LMVP…SWVV). Residues 225–471 (IQGNVPQELK…TAVLRATITP (247 aa)) form the CN hydrolase domain. Glu264 acts as the Proton acceptor in catalysis. Lys330 is an active-site residue. Cys382 functions as the Nucleophile in the catalytic mechanism.

This sequence belongs to the CN hydrolase family. Apolipoprotein N-acyltransferase subfamily.

The protein resides in the cell inner membrane. It catalyses the reaction N-terminal S-1,2-diacyl-sn-glyceryl-L-cysteinyl-[lipoprotein] + a glycerophospholipid = N-acyl-S-1,2-diacyl-sn-glyceryl-L-cysteinyl-[lipoprotein] + a 2-acyl-sn-glycero-3-phospholipid + H(+). Its pathway is protein modification; lipoprotein biosynthesis (N-acyl transfer). Its function is as follows. Catalyzes the phospholipid dependent N-acylation of the N-terminal cysteine of apolipoprotein, the last step in lipoprotein maturation. This chain is Apolipoprotein N-acyltransferase, found in Photobacterium profundum (strain SS9).